We begin with the raw amino-acid sequence, 72 residues long: Small ribosomal subunit protein bS18 (72 aa).

Belongs to the bacterial ribosomal protein bS18 family. Part of the 30S ribosomal subunit. Forms a tight heterodimer with protein bS6.

Functionally, binds as a heterodimer with protein bS6 to the central domain of the 16S rRNA, where it helps stabilize the platform of the 30S subunit. The sequence is that of Small ribosomal subunit protein bS18 from Francisella philomiragia subsp. philomiragia (strain ATCC 25017 / CCUG 19701 / FSC 153 / O#319-036).